A 350-amino-acid polypeptide reads, in one-letter code: (S)-tetrahydroprotoberberine N-methyltransferase (350 aa).

Ser91, Gly129, Asn153, Gln157, Asp179, Val180, and Val195 together coordinate S-adenosyl-L-methionine. Cys325 is a catalytic residue.

Belongs to the CFA/CMAS family. In terms of assembly, homodimer.

The protein resides in the cytoplasm. The enzyme catalyses (S)-stylopine + S-adenosyl-L-methionine = (S)-cis-N-methylstylopine + S-adenosyl-L-homocysteine. It catalyses the reaction (S)-tetrahydropalmatine + S-adenosyl-L-methionine = (S)-cis-N-methyltetrahydropalmatine + S-adenosyl-L-homocysteine. The catalysed reaction is (S)-canadine + S-adenosyl-L-methionine = (S)-cis-N-methylcanadine + S-adenosyl-L-homocysteine. It carries out the reaction (S)-scoulerine + S-adenosyl-L-methionine = (S)-cis-N-methylscoulerine + S-adenosyl-L-homocysteine. Its pathway is alkaloid biosynthesis. Functionally, N-methyltransferase with a broad substrate range, accepting protoberberine alkaloids (R,S)-stylopine, (R,S)-nandinine and (R,S)-tetrahydropalmatine, and to a lesser extent (R,S)-canadine, (R,S)-tetrahydrogroenlandicine (cheilanthifoline) and (S)-scoulerine. This is (S)-tetrahydroprotoberberine N-methyltransferase from Eschscholzia californica (California poppy).